A 122-amino-acid polypeptide reads, in one-letter code: Small ribosomal subunit protein uS13 (122 aa).

The disordered stretch occupies residues 99-122 (RGQRTHTNARTRKGPAKAIAGKKK).

This sequence belongs to the universal ribosomal protein uS13 family. As to quaternary structure, part of the 30S ribosomal subunit. Forms a loose heterodimer with protein S19. Forms two bridges to the 50S subunit in the 70S ribosome.

Functionally, located at the top of the head of the 30S subunit, it contacts several helices of the 16S rRNA. In the 70S ribosome it contacts the 23S rRNA (bridge B1a) and protein L5 of the 50S subunit (bridge B1b), connecting the 2 subunits; these bridges are implicated in subunit movement. Contacts the tRNAs in the A and P-sites. This is Small ribosomal subunit protein uS13 from Rhodopseudomonas palustris (strain BisA53).